Here is a 215-residue protein sequence, read N- to C-terminus: HTH-type transcriptional repressor FabR (215 aa).

The HTH tetR-type domain occupies K10 to L70. Residues S33 to F52 constitute a DNA-binding region (H-T-H motif).

Homodimer.

It localises to the cytoplasm. Its function is as follows. Represses the transcription of fabB, involved in unsaturated fatty acid (UFA) biosynthesis. By controlling UFA production, FabR directly influences the physical properties of the membrane bilayer. The protein is HTH-type transcriptional repressor FabR of Escherichia coli O1:K1 / APEC.